The sequence spans 240 residues: UDP-2,3-diacylglucosamine hydrolase (240 aa).

Mn(2+)-binding residues include aspartate 8, histidine 10, aspartate 41, asparagine 79, and histidine 114. Position 79–80 (79–80 (NR)) interacts with substrate. Positions 122, 160, 164, 167, and 195 each coordinate substrate. Histidine 195 and histidine 197 together coordinate Mn(2+).

The protein belongs to the LpxH family. Mn(2+) is required as a cofactor.

The protein localises to the cell inner membrane. The enzyme catalyses UDP-2-N,3-O-bis[(3R)-3-hydroxytetradecanoyl]-alpha-D-glucosamine + H2O = 2-N,3-O-bis[(3R)-3-hydroxytetradecanoyl]-alpha-D-glucosaminyl 1-phosphate + UMP + 2 H(+). It participates in glycolipid biosynthesis; lipid IV(A) biosynthesis; lipid IV(A) from (3R)-3-hydroxytetradecanoyl-[acyl-carrier-protein] and UDP-N-acetyl-alpha-D-glucosamine: step 4/6. Its function is as follows. Hydrolyzes the pyrophosphate bond of UDP-2,3-diacylglucosamine to yield 2,3-diacylglucosamine 1-phosphate (lipid X) and UMP by catalyzing the attack of water at the alpha-P atom. Involved in the biosynthesis of lipid A, a phosphorylated glycolipid that anchors the lipopolysaccharide to the outer membrane of the cell. The protein is UDP-2,3-diacylglucosamine hydrolase of Escherichia coli O157:H7.